The following is a 369-amino-acid chain: Dual-specificity RNA methyltransferase RlmN (369 aa).

Residue Glu-94 is the Proton acceptor of the active site. In terms of domain architecture, Radical SAM core spans 113–346 (ESEKWTMCLS…CTIRESRGID (234 aa)). Cysteines 120 and 351 form a disulfide. Residues Cys-127, Cys-131, and Cys-134 each coordinate [4Fe-4S] cluster. S-adenosyl-L-methionine-binding positions include 177-178 (GE), Ser-209, 232-234 (SLH), and Asn-308. The active-site S-methylcysteine intermediate is Cys-351.

The protein belongs to the radical SAM superfamily. RlmN family. It depends on [4Fe-4S] cluster as a cofactor.

It is found in the cytoplasm. It catalyses the reaction adenosine(2503) in 23S rRNA + 2 reduced [2Fe-2S]-[ferredoxin] + 2 S-adenosyl-L-methionine = 2-methyladenosine(2503) in 23S rRNA + 5'-deoxyadenosine + L-methionine + 2 oxidized [2Fe-2S]-[ferredoxin] + S-adenosyl-L-homocysteine. The enzyme catalyses adenosine(37) in tRNA + 2 reduced [2Fe-2S]-[ferredoxin] + 2 S-adenosyl-L-methionine = 2-methyladenosine(37) in tRNA + 5'-deoxyadenosine + L-methionine + 2 oxidized [2Fe-2S]-[ferredoxin] + S-adenosyl-L-homocysteine. In terms of biological role, specifically methylates position 2 of adenine 2503 in 23S rRNA and position 2 of adenine 37 in tRNAs. m2A2503 modification seems to play a crucial role in the proofreading step occurring at the peptidyl transferase center and thus would serve to optimize ribosomal fidelity. In Helicobacter hepaticus (strain ATCC 51449 / 3B1), this protein is Dual-specificity RNA methyltransferase RlmN.